A 130-amino-acid polypeptide reads, in one-letter code: Small ribosomal subunit protein uS8 (130 aa).

The protein belongs to the universal ribosomal protein uS8 family. Part of the 30S ribosomal subunit.

One of the primary rRNA binding proteins, it binds directly to 16S rRNA central domain where it helps coordinate assembly of the platform of the 30S subunit. The chain is Small ribosomal subunit protein uS8 from Pyrobaculum arsenaticum (strain DSM 13514 / JCM 11321 / PZ6).